Reading from the N-terminus, the 362-residue chain is UDP-N-acetylglucosamine--N-acetylmuramyl-(pentapeptide) pyrophosphoryl-undecaprenol N-acetylglucosamine transferase (362 aa).

UDP-N-acetyl-alpha-D-glucosamine is bound by residues 15–17 (TGG), asparagine 127, arginine 165, serine 191, isoleucine 247, 266–271 (ALTVSE), and glutamine 292.

It belongs to the glycosyltransferase 28 family. MurG subfamily.

The protein resides in the cell inner membrane. The enzyme catalyses di-trans,octa-cis-undecaprenyl diphospho-N-acetyl-alpha-D-muramoyl-L-alanyl-D-glutamyl-meso-2,6-diaminopimeloyl-D-alanyl-D-alanine + UDP-N-acetyl-alpha-D-glucosamine = di-trans,octa-cis-undecaprenyl diphospho-[N-acetyl-alpha-D-glucosaminyl-(1-&gt;4)]-N-acetyl-alpha-D-muramoyl-L-alanyl-D-glutamyl-meso-2,6-diaminopimeloyl-D-alanyl-D-alanine + UDP + H(+). It functions in the pathway cell wall biogenesis; peptidoglycan biosynthesis. Functionally, cell wall formation. Catalyzes the transfer of a GlcNAc subunit on undecaprenyl-pyrophosphoryl-MurNAc-pentapeptide (lipid intermediate I) to form undecaprenyl-pyrophosphoryl-MurNAc-(pentapeptide)GlcNAc (lipid intermediate II). The chain is UDP-N-acetylglucosamine--N-acetylmuramyl-(pentapeptide) pyrophosphoryl-undecaprenol N-acetylglucosamine transferase from Shewanella putrefaciens (strain CN-32 / ATCC BAA-453).